The chain runs to 133 residues: Small ribosomal subunit protein uS8 (133 aa).

It belongs to the universal ribosomal protein uS8 family. In terms of assembly, part of the 30S ribosomal subunit. Contacts proteins S5 and S12.

In terms of biological role, one of the primary rRNA binding proteins, it binds directly to 16S rRNA central domain where it helps coordinate assembly of the platform of the 30S subunit. The polypeptide is Small ribosomal subunit protein uS8 (Mycoplasma mobile (strain ATCC 43663 / 163K / NCTC 11711) (Mesomycoplasma mobile)).